Here is a 163-residue protein sequence, read N- to C-terminus: Putative H/ACA ribonucleoprotein complex subunit 2-like protein (163 aa).

Positions 1-27 (MGKRNLDETMNESTVSEANGDATAPTT) are disordered.

This sequence belongs to the eukaryotic ribosomal protein eL8 family. As to quaternary structure, component of the small nucleolar ribonucleoprotein particle containing H/ACA-type snoRNAs (H/ACA snoRNPs).

It is found in the nucleus. Its subcellular location is the nucleolus. In terms of biological role, required for ribosome biogenesis. Part of a complex which catalyzes pseudouridylation of rRNA. This involves the isomerization of uridine such that the ribose is subsequently attached to C5, instead of the normal N1. Pseudouridine ('psi') residues may serve to stabilize the conformation of rRNAs. In Caenorhabditis elegans, this protein is Putative H/ACA ribonucleoprotein complex subunit 2-like protein.